Consider the following 184-residue polypeptide: UPF0149 protein PSPA7_5968 (184 aa).

It belongs to the UPF0149 family.

This chain is UPF0149 protein PSPA7_5968, found in Pseudomonas paraeruginosa (strain DSM 24068 / PA7) (Pseudomonas aeruginosa (strain PA7)).